Here is a 585-residue protein sequence, read N- to C-terminus: MNVFKNFEKKIKKSLELSDIKGKNGEDLNLSKITVDPPRDSSHGHLSTNAAMVLAKSIGLNPHALAEKIIELLKNDSSIDCIDIAAPGFINIKLTKSFWQDAIKSMLKKGTSYGRIPMGQGKRINVEYVSANPTGPMHVGHCRGAVFGDVLSNLLQFVGYNITKEYYINDAGKQIEVLAHSVLLRYREALGQKINEIPEGLYPGEYLIPLGQSLAQEFSDQLLTIDKDEALSIVKERAIYAMMSMIRKDLAALNIYHDIFFSERMLYADNARAIRNTINDLTLNGYIYKGELPPPKGQNTEDWEPREQTLFRSTDVGDDQDRVLVKSDGSYTYFAADVAYFRDKFNRHFDEMIYILGADHAGYVKRLEAMAKAISGNSAKLSVFLCQLVKLFRNGHPVRMSKRAGSFVTLRDVVEEVGRDPVRFMMLYRKCEAPLDFDFAKVTEQSKDNPIFYVQYASARCHSVFRQAQEIFRIENVSNDTMIAHLNRLTDDNEIFLIRKLSEYPRIIEQAVVHKEPHRLAFYLYDLASSFHAHWNKGSDNFDLRFIQPDDKELSFARLGLIQAIMNILSSGLAIVGIEAATEMR.

Residues 131-141 carry the 'HIGH' region motif; sequence ANPTGPMHVGH.

This sequence belongs to the class-I aminoacyl-tRNA synthetase family. In terms of assembly, monomer.

It is found in the cytoplasm. The enzyme catalyses tRNA(Arg) + L-arginine + ATP = L-arginyl-tRNA(Arg) + AMP + diphosphate. The protein is Arginine--tRNA ligase of Bartonella quintana (strain Toulouse) (Rochalimaea quintana).